Here is a 219-residue protein sequence, read N- to C-terminus: MTTGGHGTDGVERRGLMFVLSSPSGAGKTTLSRLLIERMPGLRMSVSATTRPMRPGEVDGRDYLFVDKPRFEAMVRDDELLEWATVFDNRYGTPRAPVEAALSAGQDVLFDIDWQGTQQLREKARADVVSVFILPPSAGDLEKRLHSRAQDSDEVIRKRMSRASHEMSHWAEYDYIVINHDVDEAFAEVQSILKAERLKRERRIGLVGFVRGLQGQLQG.

Positions 15 to 194 (GLMFVLSSPS…AFAEVQSILK (180 aa)) constitute a Guanylate kinase-like domain. 22-29 (SPSGAGKT) is an ATP binding site.

This sequence belongs to the guanylate kinase family.

The protein resides in the cytoplasm. The enzyme catalyses GMP + ATP = GDP + ADP. In terms of biological role, essential for recycling GMP and indirectly, cGMP. In Bradyrhizobium diazoefficiens (strain JCM 10833 / BCRC 13528 / IAM 13628 / NBRC 14792 / USDA 110), this protein is Guanylate kinase.